The sequence spans 184 residues: Elongation factor P (184 aa).

This sequence belongs to the elongation factor P family.

It is found in the cytoplasm. Its pathway is protein biosynthesis; polypeptide chain elongation. Functionally, involved in peptide bond synthesis. Stimulates efficient translation and peptide-bond synthesis on native or reconstituted 70S ribosomes in vitro. Probably functions indirectly by altering the affinity of the ribosome for aminoacyl-tRNA, thus increasing their reactivity as acceptors for peptidyl transferase. The polypeptide is Elongation factor P (Verminephrobacter eiseniae (strain EF01-2)).